The following is a 250-amino-acid chain: uncharacterized protein (250 aa).

A run of 7 helical transmembrane segments spans residues 36–56 (VALGLVVSGALAYATSSVPAV), 73–93 (PLYMVVAFAPLVLMLIAGFAM), 101–121 (AGALYWTIVSLIGASLGSVML), 128–148 (VAATFFVTATAFGGLSLFGYT), 156–176 (FGSFLMMGVIGLIVASIVSIF), 180–200 (PALLFAINVLGVLIFSGLIAY), and 225–245 (FGALSLYINFINLFQFLLSFF).

Belongs to the BI1 family.

The protein resides in the cell membrane. This is an uncharacterized protein from Caulobacter vibrioides (strain ATCC 19089 / CIP 103742 / CB 15) (Caulobacter crescentus).